A 458-amino-acid chain; its full sequence is Divalent metal cation transporter MntH (458 aa).

The next 11 helical transmembrane spans lie at 38 to 58 (GFWK…VGYM), 86 to 106 (LIAM…GMDL), 119 to 139 (GIFL…AEII), 151 to 171 (IPLL…LLLM), 180 to 200 (AIVA…VILA), 223 to 243 (MLFL…LYLH), 275 to 295 (LTIA…MFYG), 315 to 335 (IVGS…LLAS), 370 to 390 (GLSI…EAQV), 395 to 415 (IYSQ…LTLF), and 436 to 456 (WFVT…TVGL).

Belongs to the NRAMP family.

The protein resides in the cell membrane. H(+)-stimulated, divalent metal cation uptake system. This is Divalent metal cation transporter MntH from Latilactobacillus sakei subsp. sakei (strain 23K) (Lactobacillus sakei subsp. sakei).